A 58-amino-acid polypeptide reads, in one-letter code: DNA-directed RNA polymerases I, II, and III subunit RPABC4 (58 aa).

Zn(2+) contacts are provided by Cys-19, Cys-22, Cys-36, and Cys-39. The C4-type zinc finger occupies 19 to 39 (CGECHTENEIKSRDPIRCREC).

It belongs to the archaeal Rpo12/eukaryotic RPC10 RNA polymerase subunit family. In terms of assembly, component of the RNA polymerase I (Pol I), RNA polymerase II (Pol II) and RNA polymerase III (Pol III) complexes consisting of at least 13, 12 and 17 subunits, respectively. Pol I complex consists of a ten-subunit catalytic core composed of POLR1A/RPA1, POLR1B/RPA2, POLR1C/RPAC1, POLR1D/RPAC2, POLR1H/RPA12, POLR2E/RPABC1, POLR2F/RPABC2, POLR2H/RPABC3, POLR2K/RPABC4 and POLR2L/RPABC5; a mobile stalk subunit POLR1F/RPA43 protruding from the core and additional subunits homologous to general transcription factors POLR1E/RPA49 and POLR1G/RPA34. Part of Pol I pre-initiation complex (PIC), in which Pol I core assembles with RRN3 and promoter-bound UTBF and SL1/TIF-IB complex. Pol II complex contains a ten-subunit catalytic core composed of POLR2A/RPB1, POLR2B/RPB2, POLR2C/RPB3, POLR2I/RPB9, POLR2J/RPB11, POLR2E/RPABC1, POLR2F/RPABC2, POLR2H/RPABC3, POLR2K/RPABC4 and POLR2L/RPABC5 and a mobile stalk composed of two subunits POLR2D/RPB4 and POLR2G/RPB7. Part of Pol II(G) complex, in which Pol II core associates with an additional subunit POLR2M; unlike conventional Pol II, Pol II(G) functions as a transcriptional repressor. Part of TBP-based Pol II pre-initiation complex (PIC), in which Pol II core assembles with general transcription factors and other specific initiation factors including GTF2E1, GTF2E2, GTF2F1, GTF2F2, TCEA1, ERCC2, ERCC3, GTF2H2, GTF2H3, GTF2H4, GTF2H5, GTF2A1, GTF2A2, GTF2B and TBP; this large multi-subunit PIC complex mediates DNA unwinding and targets Pol II core to the transcription start site where the first phosphodiester bond forms. Pol III complex consists of a ten-subunit catalytic core composed of POLR3A/RPC1, POLR3B/RPC2, POLR1C/RPAC1, POLR1D/RPAC2, POLR3K/RPC10, POLR2E/RPABC1, POLR2F/RPABC2, POLR2H/RPABC3, POLR2K/RPABC4 and POLR2L/RPABC5; a mobile stalk composed of two subunits POLR3H/RPC8 and CRCP/RPC9, protruding from the core and functioning primarily in transcription initiation; and additional subunits homologous to general transcription factors of the RNA polymerase II machinery, POLR3C/RPC3-POLR3F/RPC6-POLR3G/RPC7 heterotrimer required for transcription initiation and POLR3D/RPC4-POLR3E/RPC5 heterodimer involved in both transcription initiation and termination.

The protein localises to the nucleus. Its subcellular location is the nucleolus. DNA-dependent RNA polymerase catalyzes the transcription of DNA into RNA using the four ribonucleoside triphosphates as substrates. Common component of RNA polymerases I, II and III which synthesize ribosomal RNA precursors, mRNA precursors and many functional non-coding RNAs, and a small RNAs, such as 5S rRNA and tRNAs, respectively. The sequence is that of DNA-directed RNA polymerases I, II, and III subunit RPABC4 (POLR2K) from Bos taurus (Bovine).